We begin with the raw amino-acid sequence, 343 residues long: Probable transposase for insertion sequence element (343 aa).

It belongs to the transposase mutator family.

Required for the transposition of the insertion element. This Corynebacterium diphtheriae protein is Probable transposase for insertion sequence element.